The primary structure comprises 353 residues: MDLYRLARPLLFRADPEDAHRRALGALAWAAEQLWAGWLDSVFGYPDPRLEVKLWGLSFANPLGLAAGFDKNAEAVGAWEHLGFGFAEVGTVTRHAQPGNPRPRLFRLPADQAAINRMGFNNDGADALALRLAGRRWGIPIGINLGKSKVTPLEQASDDYLYSFERLYHLGDYFVVNVSSPNTPGLRELQQADRLGEILARLQCANRESKPLLVKIAPDLGWDAVDAVVDLCGEHRLAGVIATNTTIARSGLRSDLQETGGLSGAPLRNRSTEVIGHIWGRTRGQLPIVGVGGIFSGEDAWEKIAHGASLLQVYTGWIYEGPWMVRRILASLATRLERSGFEHLQQATGCAFS.

FMN contacts are provided by residues 67–71 (AGFDK) and Thr91. Lys71 contacts substrate. 116–120 (NRMGF) serves as a coordination point for substrate. The FMN site is built by Asn144 and Asn177. Position 177 (Asn177) interacts with substrate. Ser180 (nucleophile) is an active-site residue. Asn182 contacts substrate. FMN-binding residues include Lys215 and Thr243. 244–245 (NT) is a binding site for substrate. FMN-binding positions include Gly264, Gly293, and 314–315 (YT).

It belongs to the dihydroorotate dehydrogenase family. Type 2 subfamily. As to quaternary structure, monomer. FMN serves as cofactor.

Its subcellular location is the cell membrane. The enzyme catalyses (S)-dihydroorotate + a quinone = orotate + a quinol. The protein operates within pyrimidine metabolism; UMP biosynthesis via de novo pathway; orotate from (S)-dihydroorotate (quinone route): step 1/1. In terms of biological role, catalyzes the conversion of dihydroorotate to orotate with quinone as electron acceptor. This is Dihydroorotate dehydrogenase (quinone) from Gloeobacter violaceus (strain ATCC 29082 / PCC 7421).